Consider the following 375-residue polypeptide: Stomatin-2 (375 aa).

Positions 1-75 are disordered; that stretch reads MKTQPSEESA…IPVPTGQPRG (75 aa). Residues 11–50 are compositionally biased toward low complexity; that stretch reads SPAPVNPGNSGNSGNRRASSTRISFSDQLDGGDSGDSSSN. The chain crosses the membrane as a helical span at residues 120-140; it reads GLGFCGWFLMGLSWIMVISTF.

This sequence belongs to the band 7/mec-2 family.

It localises to the membrane. In terms of biological role, may be involved in cilia-related function. This chain is Stomatin-2 (sto-2), found in Caenorhabditis elegans.